Consider the following 346-residue polypeptide: F(420)H(2) dehydrogenase subunit H (346 aa).

8 helical membrane passes run 18-38 (GIVGLVLIGVIFMGAMGAVWL), 91-111 (IFMLGSVFLMLVALPVGAVFI), 125-145 (ISVLYIEAVSALSIFGIFMVA), 170-190 (PLGITVISVAAMTGSLNIVDI), 196-216 (LHWNIFLQPLGCFVFFVSLMA), 257-277 (ILGSFLVALLFLGGWNVPGFI), 284-304 (GIIVPTGFLIVKVVFVLMVII), and 326-346 (LLPLALLNLVWAVGLGLYLGA).

The protein belongs to the complex I subunit 1 family. The FPO complex is composed of at least 13 different subunits. FpoA, FpoH, FpoJ, FpoK, FpoL, FpoM and FpoN proteins constitute the membrane sector of the complex.

The protein resides in the cell membrane. The catalysed reaction is methanophenazine + reduced coenzyme F420-(gamma-L-Glu)(n) = dihydromethanophenazine + oxidized coenzyme F420-(gamma-L-Glu)(n) + H(+). Functionally, component of the F(420)H(2) dehydrogenase (FPO complex) which is part of the energy-conserving F(420)H(2):heterodisulfide oxidoreductase system. The membrane-bound electron transfer system of the complex plays an important role in the metabolism of methylotrophic methanogens when the organisms grow on methanol or methylamines. Catalyzes the oxidation of methanophenazine to dihydromethanophenazine. It shuttles electrons from F(420)H(2), via FAD and iron-sulfur (Fe-S) centers, to methanophenazine (an electron carrier in the membrane). It couples the redox reaction to proton translocation (for every two electrons transferred, two hydrogen ions are translocated across the cytoplasmic membrane), and thus conserves the redox energy in a proton gradient. The polypeptide is F(420)H(2) dehydrogenase subunit H (Methanosarcina barkeri (strain Fusaro / DSM 804)).